The primary structure comprises 945 residues: Isoleucine--tRNA ligase (945 aa).

The 'HIGH' region motif lies at 66-76 (PYANGDIHLGH). Glu-581 contributes to the L-isoleucyl-5'-AMP binding site. The 'KMSKS' region signature appears at 622–626 (KMSKS). Position 625 (Lys-625) interacts with ATP. Residues Cys-908, Cys-911, Cys-928, and Cys-931 each contribute to the Zn(2+) site.

This sequence belongs to the class-I aminoacyl-tRNA synthetase family. IleS type 1 subfamily. Monomer. It depends on Zn(2+) as a cofactor.

The protein localises to the cytoplasm. The enzyme catalyses tRNA(Ile) + L-isoleucine + ATP = L-isoleucyl-tRNA(Ile) + AMP + diphosphate. Its function is as follows. Catalyzes the attachment of isoleucine to tRNA(Ile). As IleRS can inadvertently accommodate and process structurally similar amino acids such as valine, to avoid such errors it has two additional distinct tRNA(Ile)-dependent editing activities. One activity is designated as 'pretransfer' editing and involves the hydrolysis of activated Val-AMP. The other activity is designated 'posttransfer' editing and involves deacylation of mischarged Val-tRNA(Ile). The chain is Isoleucine--tRNA ligase from Burkholderia orbicola (strain MC0-3).